Consider the following 187-residue polypeptide: Threonylcarbamoyl-AMP synthase (187 aa).

The YrdC-like domain occupies 4–187 (QSTIAAAITC…DAMNGKVFRG (184 aa)).

It belongs to the SUA5 family. TsaC subfamily.

The protein localises to the cytoplasm. It carries out the reaction L-threonine + hydrogencarbonate + ATP = L-threonylcarbamoyladenylate + diphosphate + H2O. Its function is as follows. Required for the formation of a threonylcarbamoyl group on adenosine at position 37 (t(6)A37) in tRNAs that read codons beginning with adenine. Catalyzes the conversion of L-threonine, HCO(3)(-)/CO(2) and ATP to give threonylcarbamoyl-AMP (TC-AMP) as the acyladenylate intermediate, with the release of diphosphate. The chain is Threonylcarbamoyl-AMP synthase from Pseudoalteromonas translucida (strain TAC 125).